The primary structure comprises 247 residues: Segregation and condensation protein A (247 aa).

It belongs to the ScpA family. In terms of assembly, component of a cohesin-like complex composed of ScpA, ScpB and the Smc homodimer, in which ScpA and ScpB bind to the head domain of Smc. The presence of the three proteins is required for the association of the complex with DNA.

It localises to the cytoplasm. Its function is as follows. Participates in chromosomal partition during cell division. May act via the formation of a condensin-like complex containing Smc and ScpB that pull DNA away from mid-cell into both cell halves. In Bacillus cereus (strain 03BB102), this protein is Segregation and condensation protein A.